The following is a 359-amino-acid chain: MAEISKENEDNFIFKMKVLYNQMIHIPSMFSTLKTEFPLFFETDTTNIIHLPMTLQSKIIQKPTRGYCSKFIKMLTQTLERLDKEVNESILEKFLEIISPITPHQNDDGGDNNQSEDKTEYCWKSYYIQNKWITLKNENAYNLVGMTTWGAAYQLSDFILSNQNLFINKNILELGSGTGLVGIILDFIKPLKKVILTDYSPKVLKNLKFNMELNNLEIQDFINDDDDDNNNNVNKENDDKINQVRVLDWEIEDLNILNNYSGLNDSNIILGADIVYEPSLCKYLVSILYFLLERNENSVAYISSTIRNQSTFSIFQKELNLKNLTVIDITKQFEQSSPTSPFIYDRSQIVLYKIYLEKK.

This is an uncharacterized protein from Dictyostelium discoideum (Social amoeba).